Consider the following 381-residue polypeptide: GDP-mannose transporter (381 aa).

At 1 to 39 (MVESKKTDDYAIEMDKIDQGSKNFEAAAPPQPRSVPSSS) the chain is on the cytoplasmic side. The chain crosses the membrane as a helical span at residues 40 to 60 (LSGNPVLPVLAYCGSSILMTV). The Lumenal portion of the chain corresponds to 61-68 (MNKYVLSG). Residues 69-89 (LDFNLNFFLLCVQSIVCIIAI) form a helical membrane-spanning segment. The Cytoplasmic portion of the chain corresponds to 90-109 (QTCKFCGLITYRDFSADEAK). A helical membrane pass occupies residues 110–126 (KWFPISLLLIGMIYTGS). At 127-133 (KALQFLS) the chain is on the lumenal side. The helical transmembrane segment at 134–150 (IPVYTIFKNLTIILIAY) threads the bilayer. The Cytoplasmic portion of the chain corresponds to 151-159 (GEVLWFGGS). The chain crosses the membrane as a helical span at residues 160–181 (VTGLTLFSFGLMVLSSIIAAWA). Residues 182 to 199 (DIKHAVESSGDTSAQVST) are Lumenal-facing. The helical transmembrane segment at 200–220 (LNAGYIWMLINCLCTSSYVLG) threads the bilayer. The Cytoplasmic portion of the chain corresponds to 221-232 (MRKRIKLTNFKD). Residues 233 to 253 (FDTMFYNNLLSIPVLVVLTGL) form a helical membrane-spanning segment. The Lumenal portion of the chain corresponds to 254-273 (MEDWSSANIDRNFPQADRSS). Residues 274 to 294 (IMFAMILSGLSSVFISYTSAW) form a helical membrane-spanning segment. Residues 295 to 302 (CVRVTSST) are Cytoplasmic-facing. The helical transmembrane segment at 303–323 (TYSMVGALNKLPIALSGLIFF) threads the bilayer. Topologically, residues 324 to 326 (DAP) are lumenal. The chain crosses the membrane as a helical span at residues 327–347 (VTFPSVSAIAVGFVSGIVYAI). Topologically, residues 348 to 381 (AKIKQNAKPKTGVLPTSNPLVSASSQSMRDSLRS) are cytoplasmic.

The protein belongs to the TPT transporter family. SLC35D subfamily. In terms of assembly, homooligomer.

It localises to the golgi apparatus membrane. Its subcellular location is the cytoplasmic vesicle membrane. The protein localises to the endoplasmic reticulum membrane. Its function is as follows. Involved in the import of GDP-mannose from the cytoplasm into the Golgi lumen. This is GDP-mannose transporter (gmt1) from Aspergillus oryzae (strain ATCC 42149 / RIB 40) (Yellow koji mold).